The chain runs to 482 residues: GPI mannosyltransferase 3 (482 aa).

A helical transmembrane segment spans residues 12 to 32; it reads LFAFIFIFRLANSFAIETFFQ. The N-linked (GlcNAc...) asparagine glycan is linked to asparagine 80. Helical transmembrane passes span 114 to 134, 137 to 155, 175 to 195, and 199 to 219; these read KLAWITLMLSLFNPFNWYVIT, FSNNLEMVFTVLALRFWPW, IIRPTNILIWIPLGIWLLISI, and LKWVALSFLEVVLILLINTAL. Asparagine 242 is a glycosylation site (N-linked (GlcNAc...) asparagine). 3 helical membrane passes run 252–272, 274–294, and 324–344; these read WHFYIFQAIPLMLMLYLPLMI, GLKKNILLLTGLFYIIGFSLI, and FVLIGILLNICIGLFFTNVHE.

The protein belongs to the glycosyltransferase 22 family. PIGB subfamily.

The protein resides in the endoplasmic reticulum membrane. The protein operates within glycolipid biosynthesis; glycosylphosphatidylinositol-anchor biosynthesis. Mannosyltransferase involved in glycosylphosphatidylinositol-anchor biosynthesis. Transfers the third mannose to Man2-GlcN-acyl-PI during GPI precursor assembly. The chain is GPI mannosyltransferase 3 (GPI10) from Candida albicans (strain SC5314 / ATCC MYA-2876) (Yeast).